Here is a 679-residue protein sequence, read N- to C-terminus: DNA ligase (679 aa).

NAD(+) contacts are provided by residues 86–90 and 129–130; these read DEAYD and ST. The active-site N6-AMP-lysine intermediate is the lysine 167. 3 residues coordinate NAD(+): arginine 183, glutamate 214, and lysine 326. Residues cysteine 417, cysteine 420, cysteine 433, and cysteine 439 each contribute to the Zn(2+) site. The 81-residue stretch at 599–679 folds into the BRCT domain; it reads GEKSPISGKT…EAYRQLVSLD (81 aa).

It belongs to the NAD-dependent DNA ligase family. LigA subfamily. The cofactor is Mg(2+). It depends on Mn(2+) as a cofactor.

It catalyses the reaction NAD(+) + (deoxyribonucleotide)n-3'-hydroxyl + 5'-phospho-(deoxyribonucleotide)m = (deoxyribonucleotide)n+m + AMP + beta-nicotinamide D-nucleotide.. Functionally, DNA ligase that catalyzes the formation of phosphodiester linkages between 5'-phosphoryl and 3'-hydroxyl groups in double-stranded DNA using NAD as a coenzyme and as the energy source for the reaction. It is essential for DNA replication and repair of damaged DNA. In Desulfotalea psychrophila (strain LSv54 / DSM 12343), this protein is DNA ligase.